Consider the following 201-residue polypeptide: Potassium-transporting ATPase KdpC subunit (201 aa).

A helical transmembrane segment spans residues 7 to 29; that stretch reads PALVLLTALTAITGLAYPLAMTG.

This sequence belongs to the KdpC family. In terms of assembly, the system is composed of three essential subunits: KdpA, KdpB and KdpC.

It is found in the cell inner membrane. Part of the high-affinity ATP-driven potassium transport (or Kdp) system, which catalyzes the hydrolysis of ATP coupled with the electrogenic transport of potassium into the cytoplasm. This subunit acts as a catalytic chaperone that increases the ATP-binding affinity of the ATP-hydrolyzing subunit KdpB by the formation of a transient KdpB/KdpC/ATP ternary complex. The chain is Potassium-transporting ATPase KdpC subunit from Methylobacterium radiotolerans (strain ATCC 27329 / DSM 1819 / JCM 2831 / NBRC 15690 / NCIMB 10815 / 0-1).